A 182-amino-acid polypeptide reads, in one-letter code: Small ribosomal subunit protein uS5 (182 aa).

Residues 16–79 (FVDRLVHINR…ESAKRGMIYV (64 aa)) enclose the S5 DRBM domain.

Belongs to the universal ribosomal protein uS5 family. As to quaternary structure, part of the 30S ribosomal subunit. Contacts proteins S4 and S8.

In terms of biological role, with S4 and S12 plays an important role in translational accuracy. Its function is as follows. Located at the back of the 30S subunit body where it stabilizes the conformation of the head with respect to the body. This Bartonella henselae (strain ATCC 49882 / DSM 28221 / CCUG 30454 / Houston 1) (Rochalimaea henselae) protein is Small ribosomal subunit protein uS5.